A 329-amino-acid polypeptide reads, in one-letter code: Protein phosphatase 1 regulatory subunit 42 (329 aa).

LRR repeat units lie at residues 30–51 (KLTHLNFSDKNIEEIDDLSVCR), 52–73 (NLTVLYLYDNQISQICNLGFAS), 74–95 (NLTHLYMQNNNISCIENLSSLH), 96–117 (KLSKLFLGGNSITVVEGLEELK), 118–139 (SLKELHVEGQKLPCGEKLAFDP), 148–169 (TLCILNISKNNIDELWDLAPLR), and 170–191 (KMTHLFAADNQLHDIQELETVF). The LRRCT domain maps to 205–243 (NPVCHKPKYRDRLITVCKFLDDLDGKQINELSRQFLINW). The tract at residues 268–329 (STSADFHLGP…SSTEWQSLKI (62 aa)) is disordered. A compositionally biased stretch (polar residues) spans 318–329 (GDSSTEWQSLKI).

The protein resides in the cytoplasm. Its subcellular location is the cytoskeleton. It is found in the microtubule organizing center. It localises to the centrosome. Functionally, may regulate phosphatase activity of protein phosphatase 1 (PP1) complexes. This chain is Protein phosphatase 1 regulatory subunit 42 (ppp1r42), found in Danio rerio (Zebrafish).